Consider the following 477-residue polypeptide: Glycogen synthase (477 aa).

Residue lysine 15 participates in ADP-alpha-D-glucose binding.

The protein belongs to the glycosyltransferase 1 family. Bacterial/plant glycogen synthase subfamily.

The enzyme catalyses [(1-&gt;4)-alpha-D-glucosyl](n) + ADP-alpha-D-glucose = [(1-&gt;4)-alpha-D-glucosyl](n+1) + ADP + H(+). Its pathway is glycan biosynthesis; glycogen biosynthesis. Its function is as follows. Synthesizes alpha-1,4-glucan chains using ADP-glucose. This chain is Glycogen synthase (glgA), found in Salmonella typhimurium (strain LT2 / SGSC1412 / ATCC 700720).